The primary structure comprises 110 residues: Cytochrome c6 (110 aa).

A signal peptide spans 1-25 (MKKLVSSVILALILFGFSWVSPAFA). 4 residues coordinate heme c: Cys39, Cys42, His43, and Met83.

This sequence belongs to the cytochrome c family. PetJ subfamily. As to quaternary structure, monomer. In terms of processing, binds 1 heme c group covalently per subunit.

It is found in the cellular thylakoid lumen. Functions as an electron carrier between membrane-bound cytochrome b6-f and photosystem I in oxygenic photosynthesis. The protein is Cytochrome c6 of Gloeothece citriformis (strain PCC 7424) (Cyanothece sp. (strain PCC 7424)).